A 701-amino-acid polypeptide reads, in one-letter code: CRS2-associated factor 1, chloroplastic (701 aa).

The N-terminal 37 residues, 1–37 (MSLKLNTPFPIFAPSLFPNHNPRAPSEIRFSRWGNAN), are a transit peptide targeting the chloroplast. Disordered regions lie at residues 68–136 (VHTH…PEVK) and 191–221 (LPQS…QKPG). CRM domains follow at residues 241 to 337 (EPLT…TRPR) and 359 to 455 (EGLT…LTTP). A disordered region spans residues 471–532 (LPEDDEPSVS…SLQSWSTKDV (62 aa)). 2 stretches are compositionally biased toward polar residues: residues 479 to 492 (VSPN…QNPP) and 520 to 530 (TINSLQSWSTK). The segment at 564–586 (RVLILMKQAVESGTALVLDAADL) is CRS2 binding.

As to quaternary structure, interacts with CRS2 and RNA. Part of large ribonucleo-protein complexes that include group IIB introns, CRS2 and CAF1.

It localises to the plastid. It is found in the chloroplast stroma. Functionally, required for the splicing of group IIB introns in chloroplasts. Forms splicing particles with CRS2. Interacts with RNA and confers intron specificity of the splicing particles. This Arabidopsis thaliana (Mouse-ear cress) protein is CRS2-associated factor 1, chloroplastic.